The sequence spans 36 residues: DNA binding protein ORF8 (36 aa).

It belongs to the microviridae J protein family.

It localises to the virion. The protein localises to the host cytoplasm. In terms of biological role, mediates ssDNA packaging into virion, it locates to the internal surface of the capsid. Additionally, plays a role in viral attachment to the host cell. This chain is DNA binding protein ORF8, found in Chlamydia phage 1 (Bacteriophage Chp1).